We begin with the raw amino-acid sequence, 384 residues long: Substance-K receptor (384 aa).

Residues 1 to 32 (MGACVVMTDINISSGLDSNATGITAFSMPGWQ) are Extracellular-facing. N-linked (GlcNAc...) asparagine glycans are attached at residues Asn-11 and Asn-19. Residues 33–56 (LALWTAAYLALVLVAVMGNATVIW) traverse the membrane as a helical segment. The Cytoplasmic portion of the chain corresponds to 57–69 (IILAHQRMRTVTN). A helical membrane pass occupies residues 70–90 (YFIVNLALADLCMAAFNAAFN). Residues 91–107 (FVYASHNIWYFGRAFCY) lie on the Extracellular side of the membrane. Cysteines 106 and 181 form a disulfide. A helical transmembrane segment spans residues 108-129 (FQNLFPITAMFVSIYSMTAIAA). Residues 130-149 (DRYMAIVHPFQPRLSAPGTR) lie on the Cytoplasmic side of the membrane. A helical membrane pass occupies residues 150 to 170 (AVIAGIWLVALALAFPQCFYS). At 171 to 196 (TITTDEGATKCVVAWPEDSGGKMLLL) the chain is on the extracellular side. A helical membrane pass occupies residues 197–218 (YHLIVIALIYFLPLVVMFVAYS). At 219–251 (VIGLTLWRRSVPGHQAHGANLRHLQAKKKFVKT) the chain is on the cytoplasmic side. The chain crosses the membrane as a helical span at residues 252–272 (MVLVVVTFAICWLPYHLYFIL). The Extracellular segment spans residues 273-290 (GTFQEDIYCHKFIQQVYL). A helical transmembrane segment spans residues 291-310 (ALFWLAMSSTMYNPIIYCCL). Residues 311–384 (NHRFRSGFRL…SPQAGVSTEP (74 aa)) are Cytoplasmic-facing. Cys-324 is lipidated: S-palmitoyl cysteine.

The protein belongs to the G-protein coupled receptor 1 family.

It localises to the cell membrane. Its function is as follows. This is a receptor for the tachykinin neuropeptide substance K (neurokinin A). It is associated with G proteins that activate a phosphatidylinositol-calcium second messenger system. The rank order of affinity of this receptor to tachykinins is: substance K &gt; neuromedin-K &gt; substance P. The polypeptide is Substance-K receptor (TACR2) (Bos taurus (Bovine)).